A 319-amino-acid chain; its full sequence is Polyprenal reductase (319 aa).

Residues 1 to 12 lie on the Cytoplasmic side of the membrane; it reads MQLVQLLPPGVS. The chain crosses the membrane as a helical span at residues 13–33; the sequence is LLALVWLAVDAAFLTALLLYL. Residues 34–79 lie on the Lumenal side of the membrane; it reads QRGCDSGRSLLCSVFQDLIRYGKTKSGLRRPSWLQWFDIPKRCFWH. Residues 80–100 traverse the membrane as a helical segment; that stretch reads FYFVSLVWNGFLLWILLHLLL. The Cytoplasmic segment spans residues 101–122; the sequence is QSVPVPEWLQAVLQFLCAGSEP. Residues 123 to 143 form a helical membrane-spanning segment; the sequence is QVLGGELSVVLAFSLLWLHSL. Residues 144-158 lie on the Lumenal side of the membrane; it reads RRLLECLFVSIFSNG. A helical membrane pass occupies residues 159–179; the sequence is VIHFVQYCFGLGYYILIGFTI. Over 180 to 195 the chain is Cytoplasmic; it reads LGYCPLDRRTAVSLDD. Residues 196–216 traverse the membrane as a helical segment; sequence LLMQGNWYHILGLTLYVWASL. Over 217-266 the chain is Lumenal; it reads HQYTCHCILADLRKSASGAIINLKHAVPTGDWFEKVSCPHYFAELLIYLS. A helical transmembrane segment spans residues 267 to 287; sequence IAVVFGLLNTIWWLVVLYVLL. The Cytoplasmic segment spans residues 288 to 319; that stretch reads SQALAAVLCHEFYHEKFDSYPIHRKAFIPLIF.

This sequence belongs to the steroid 5-alpha reductase family. Polyprenal reductase subfamily.

Its subcellular location is the endoplasmic reticulum membrane. It catalyses the reaction a di-trans,poly-cis-dolichal + NADP(+) = a di-trans,poly-cis-polyprenal + NADPH + H(+). It carries out the reaction a 3-oxo-5alpha-steroid + NADP(+) = a 3-oxo-Delta(4)-steroid + NADPH + H(+). The enzyme catalyses androst-4-ene-3,17-dione + NADPH + H(+) = 5alpha-androstan-3,17-dione + NADP(+). The catalysed reaction is 17beta-hydroxy-5alpha-androstan-3-one + NADP(+) = testosterone + NADPH + H(+). Its pathway is protein modification; protein glycosylation. In terms of biological role, plays a key role in early steps of protein N-linked glycosylation by being involved in the conversion of polyprenol into dolichol. Acts as a polyprenal reductase that mediates the reduction of polyprenal into dolichal in a NADP-dependent mechanism. Dolichols are required for the synthesis of dolichol-linked monosaccharides and the oligosaccharide precursor used for N-glycosylation. Also able to convert testosterone (T) into 5-alpha-dihydrotestosterone (DHT). This is Polyprenal reductase (srd5a3) from Xenopus laevis (African clawed frog).